Consider the following 69-residue polypeptide: U-scoloptoxin(21)-Sm2a (69 aa).

The N-terminal stretch at 1-21 (MFFLGFIIVCASEEQSDNRLP) is a signal peptide. Positions 46 to 69 (ANDPNGPGRRRRSPIVREEILRHP) are disordered. The segment covering 60–69 (IVREEILRHP) has biased composition (basic and acidic residues).

This sequence belongs to the scoloptoxin-21 family. Expressed by the venom gland.

Its subcellular location is the secreted. The chain is U-scoloptoxin(21)-Sm2a from Scolopendra morsitans (Tanzanian blue ringleg centipede).